The following is a 500-amino-acid chain: Cytochrome P450 monooxygenase astJ (500 aa).

Residue cysteine 440 coordinates heme.

This sequence belongs to the cytochrome P450 family. Heme serves as cofactor.

Its pathway is secondary metabolite biosynthesis; terpenoid biosynthesis. Cytochrome P450 monooxygenase; part of the gene cluster that mediates the biosynthesis of astellolides, drimane-type sesquiterpene esters that show antimicrobial, anti-inflammatory, and anti-tumor activities. The first step in astellolide biosynthesis is performed by the sesquiterpene cyclase astC that catalyzes the formation of drimanyl pyrophosphate from farnesyl pyrophosphate. Drimanyl pyrophosphate is then dephosphorylated by the sesquiterpene phosphatase astI to produce drimanyl monophosphate which is further dephosphorylated to drim-8-ene-11-ol by atsK. Drim-8-ene-11-ol is converted to confertifolin, probably by the cytochrome P450 monooxygenase astD and/or the dehydrogenase astE. The cytochrome P450 monooxygenases astB, astF and astJ then hydroxylate confertifolin at C6, C14, or C15 to form trihydroxy confertifolin. The nonribosomal peptide synthetase astA catalyzes ester bond formation between trihydroxy contifolin and benzoic acid (BA) or 4-hydroxy benzoic acid (4HBA), leading to the formation of dideacetyl astellolides A and B, respectively. Finally, the O-acetyltransferase astG converts dideacetyl astellolides A and B into deacetyl astellolides A and B. This is Cytochrome P450 monooxygenase astJ from Aspergillus oryzae (strain ATCC 42149 / RIB 40) (Yellow koji mold).